The sequence spans 247 residues: Uridylate kinase (247 aa).

15–18 (KLSG) is an ATP binding site. Residues 23–28 (GEEGFG) are involved in allosteric activation by GTP. Residue glycine 57 coordinates UMP. The ATP site is built by glycine 58 and arginine 62. UMP is bound by residues aspartate 77 and 138–145 (TGNPFFTT). ATP-binding residues include threonine 165, tyrosine 171, and aspartate 174.

This sequence belongs to the UMP kinase family. Homohexamer.

The protein resides in the cytoplasm. It catalyses the reaction UMP + ATP = UDP + ADP. It functions in the pathway pyrimidine metabolism; CTP biosynthesis via de novo pathway; UDP from UMP (UMPK route): step 1/1. With respect to regulation, allosterically activated by GTP. Inhibited by UTP. Catalyzes the reversible phosphorylation of UMP to UDP. This is Uridylate kinase from Pseudoalteromonas atlantica (strain T6c / ATCC BAA-1087).